The following is a 439-amino-acid chain: Probable anion transporter 7 (439 aa).

The first 28 residues, 1–28 (MTALTRMKFPKRYVIVLLTFICTNVCYI), serve as a signal peptide directing secretion. The next 11 helical transmembrane spans lie at 53 to 73 (MILS…GWAA), 81 to 101 (VLLL…LDPK), 104 to 124 (VILV…FPAI), 143 to 163 (LTTS…PSLV), 167 to 187 (GAQS…VIWL), 232 to 252 (IIFS…HYAL), 280 to 300 (LPYF…DHLI), 312 to 332 (KLLN…LPLF), 338 to 358 (TVLC…GFAV), 367 to 387 (FAGI…IVGV), and 412 to 432 (TVFF…LIFS).

Belongs to the major facilitator superfamily. Sodium/anion cotransporter (TC 2.A.1.14) family.

It is found in the cell membrane. In terms of biological role, probable anion transporter. In Oryza sativa subsp. japonica (Rice), this protein is Probable anion transporter 7 (PHT4;7).